Here is a 399-residue protein sequence, read N- to C-terminus: Tryptophan synthase beta chain (399 aa).

K92 is modified (N6-(pyridoxal phosphate)lysine).

Belongs to the TrpB family. In terms of assembly, tetramer of two alpha and two beta chains. The cofactor is pyridoxal 5'-phosphate.

The catalysed reaction is (1S,2R)-1-C-(indol-3-yl)glycerol 3-phosphate + L-serine = D-glyceraldehyde 3-phosphate + L-tryptophan + H2O. Its pathway is amino-acid biosynthesis; L-tryptophan biosynthesis; L-tryptophan from chorismate: step 5/5. The beta subunit is responsible for the synthesis of L-tryptophan from indole and L-serine. This chain is Tryptophan synthase beta chain, found in Nitrosomonas eutropha (strain DSM 101675 / C91 / Nm57).